Reading from the N-terminus, the 491-residue chain is Glutamyl-tRNA(Gln) amidotransferase subunit A (491 aa).

Active-site charge relay system residues include K80 and S155. S179 serves as the catalytic Acyl-ester intermediate.

This sequence belongs to the amidase family. GatA subfamily. Heterotrimer of A, B and C subunits.

It catalyses the reaction L-glutamyl-tRNA(Gln) + L-glutamine + ATP + H2O = L-glutaminyl-tRNA(Gln) + L-glutamate + ADP + phosphate + H(+). Allows the formation of correctly charged Gln-tRNA(Gln) through the transamidation of misacylated Glu-tRNA(Gln) in organisms which lack glutaminyl-tRNA synthetase. The reaction takes place in the presence of glutamine and ATP through an activated gamma-phospho-Glu-tRNA(Gln). This chain is Glutamyl-tRNA(Gln) amidotransferase subunit A, found in Salinispora tropica (strain ATCC BAA-916 / DSM 44818 / JCM 13857 / NBRC 105044 / CNB-440).